A 514-amino-acid chain; its full sequence is 3-octaprenyl-4-hydroxybenzoate carboxy-lyase (514 aa).

N177 is a Mn(2+) binding site. Residues 180-182 (IYR), 194-196 (RWL), and 199-200 (RG) contribute to the prenylated FMN site. Position 243 (E243) interacts with Mn(2+). The active-site Proton donor is the D314.

This sequence belongs to the UbiD family. In terms of assembly, homohexamer. Prenylated FMN is required as a cofactor. Mn(2+) serves as cofactor.

The protein resides in the cell membrane. It carries out the reaction a 4-hydroxy-3-(all-trans-polyprenyl)benzoate + H(+) = a 2-(all-trans-polyprenyl)phenol + CO2. It participates in cofactor biosynthesis; ubiquinone biosynthesis. Functionally, catalyzes the decarboxylation of 3-octaprenyl-4-hydroxy benzoate to 2-octaprenylphenol, an intermediate step in ubiquinone biosynthesis. This chain is 3-octaprenyl-4-hydroxybenzoate carboxy-lyase, found in Bordetella pertussis (strain Tohama I / ATCC BAA-589 / NCTC 13251).